A 159-amino-acid chain; its full sequence is Cyclic pyranopterin monophosphate synthase (159 aa).

Residues 75–77 (LCH) and 113–114 (ME) contribute to the substrate site. Aspartate 128 is a catalytic residue.

This sequence belongs to the MoaC family. As to quaternary structure, homohexamer; trimer of dimers.

It catalyses the reaction (8S)-3',8-cyclo-7,8-dihydroguanosine 5'-triphosphate = cyclic pyranopterin phosphate + diphosphate. It functions in the pathway cofactor biosynthesis; molybdopterin biosynthesis. Catalyzes the conversion of (8S)-3',8-cyclo-7,8-dihydroguanosine 5'-triphosphate to cyclic pyranopterin monophosphate (cPMP). This chain is Cyclic pyranopterin monophosphate synthase, found in Serratia proteamaculans (strain 568).